The following is a 547-amino-acid chain: Pyochelin synthase PchD (547 aa).

It belongs to the ATP-dependent AMP-binding enzyme family.

It catalyses the reaction salicylate + holo-[ACP] + ATP = salicyl-[ACP] + AMP + diphosphate. It participates in siderophore biosynthesis. The protein operates within antifungal biosynthesis. Functionally, involved in the biosynthesis of the siderophore pyochelin. Specifically adenylates salicylate and loads it onto the holo form of PchE via a thioester linkage to the phosphopanthetheine moiety. Is also involved in the synthesis of the antifungal antibiotic dihydroaeruginoic acid (Dha or hydroxyphenyl-thiazolinyl-carboxylate), a precursor of pyochelin. In Pseudomonas aeruginosa (strain UCBPP-PA14), this protein is Pyochelin synthase PchD.